A 459-amino-acid polypeptide reads, in one-letter code: uncharacterized protein (459 aa).

One can recognise a TRAM domain in the interval Pro-5–Lys-63. [4Fe-4S] cluster-binding residues include Cys-76, Cys-82, Cys-85, and Cys-166. S-adenosyl-L-methionine contacts are provided by Gln-290, Tyr-319, Asp-340, and Asp-388. Cys-415 (nucleophile) is an active-site residue.

It belongs to the class I-like SAM-binding methyltransferase superfamily. RNA M5U methyltransferase family.

This is an uncharacterized protein from Listeria monocytogenes serovar 1/2a (strain ATCC BAA-679 / EGD-e).